A 618-amino-acid chain; its full sequence is tRNA 5-methylaminomethyl-2-thiouridine biosynthesis bifunctional protein MnmC (618 aa).

The tRNA (mnm(5)s(2)U34)-methyltransferase stretch occupies residues 1–231 (MLQTYAPIDF…KRHMLSAVYE (231 aa)). Positions 256 to 618 (IGAGIAGATT…KDIIRGHLNN (363 aa)) are FAD-dependent cmnm(5)s(2)U34 oxidoreductase.

In the N-terminal section; belongs to the methyltransferase superfamily. tRNA (mnm(5)s(2)U34)-methyltransferase family. The protein in the C-terminal section; belongs to the DAO family. FAD is required as a cofactor.

Its subcellular location is the cytoplasm. It catalyses the reaction 5-aminomethyl-2-thiouridine(34) in tRNA + S-adenosyl-L-methionine = 5-methylaminomethyl-2-thiouridine(34) in tRNA + S-adenosyl-L-homocysteine + H(+). Its function is as follows. Catalyzes the last two steps in the biosynthesis of 5-methylaminomethyl-2-thiouridine (mnm(5)s(2)U) at the wobble position (U34) in tRNA. Catalyzes the FAD-dependent demodification of cmnm(5)s(2)U34 to nm(5)s(2)U34, followed by the transfer of a methyl group from S-adenosyl-L-methionine to nm(5)s(2)U34, to form mnm(5)s(2)U34. This is tRNA 5-methylaminomethyl-2-thiouridine biosynthesis bifunctional protein MnmC from Dichelobacter nodosus (strain VCS1703A).